The chain runs to 274 residues: Pyrogallol hydroxytransferase small subunit (274 aa).

Residues Cys-13, Cys-16, Cys-19, Cys-23, Cys-68, Cys-71, Cys-76, Cys-109, Cys-126, Cys-129, Cys-145, and Cys-149 each contribute to the [4Fe-4S] cluster site.

In terms of assembly, heterodimer of a large and a small subunit. [4Fe-4S] cluster is required as a cofactor.

The catalysed reaction is 1,2,3,5-tetrahydroxybenzene + 1,2,3-trihydroxybenzene = 1,2,3,5-tetrahydroxybenzene + 1,3,5-trihydroxybenzene. In terms of biological role, isomerization of pyrogallol to phloroglucin. In Pelobacter acidigallici, this protein is Pyrogallol hydroxytransferase small subunit (bthL).